A 629-amino-acid polypeptide reads, in one-letter code: Flap endonuclease GEN-like 1 (629 aa).

Positions 1 to 87 are N-domain; that stretch reads MGVGGSFWDL…DGQPSPLKSQ (87 aa). An XPG-N domain region spans residues 2 to 98; it reads GVGGSFWDLL…RAARFFRGSG (97 aa). Residues aspartate 31, aspartate 78, glutamate 148, glutamate 150, aspartate 169, aspartate 171, and aspartate 221 each contribute to the Mg(2+) site. The segment at 136-221 is XPG-I domain; the sequence is EYLGMPVLRA…VAMALLVGSD (86 aa). An I-domain region spans residues 136–225; the sequence is EYLGMPVLRA…LLVGSDHDLH (90 aa). The 5'-3' exonuclease domain stretch occupies residues 221-421; that stretch reads DHDLHGVPGF…MLPMLSTIYL (201 aa). The segment at 594–617 is disordered; sequence KKGLSGDSGKDGSRKSSDVDLSKN. Basic and acidic residues predominate over residues 601-614; that stretch reads SGKDGSRKSSDVDL.

Belongs to the XPG/RAD2 endonuclease family. GEN subfamily. Monomer. Interacts with PCNA. PCNA stimulates the nuclease activity without altering cleavage specificity. Requires Mg(2+) as cofactor. As to expression, highly expressed in anthers. Expressed in roots and leaves.

The protein resides in the nucleus. Its function is as follows. Endonuclease which cleaves flap structures at the junction between single-stranded DNA and double-stranded DNA. Possesses both single-stranded and double-stranded DNA-binding activities. Involved in early microspore development, but does not alter meiosis or tapetal cells development. Possesses Holliday junction (HJ) resolvase activity in vitro. Cleaves HJ at symmetrically related sites of the branch point. The protein is Flap endonuclease GEN-like 1 of Oryza sativa subsp. japonica (Rice).